A 427-amino-acid chain; its full sequence is Histidine--tRNA ligase (427 aa).

The protein belongs to the class-II aminoacyl-tRNA synthetase family. Homodimer.

It localises to the cytoplasm. The enzyme catalyses tRNA(His) + L-histidine + ATP = L-histidyl-tRNA(His) + AMP + diphosphate + H(+). This chain is Histidine--tRNA ligase, found in Chloroherpeton thalassium (strain ATCC 35110 / GB-78).